The sequence spans 461 residues: Cysteine--tRNA ligase (461 aa).

Cys-28 contacts Zn(2+). Positions 30 to 40 match the 'HIGH' region motif; that stretch reads ITVYDLCHIGH. Residues Cys-209, His-234, and Glu-238 each coordinate Zn(2+). Residues 266–270 carry the 'KMSKS' region motif; that stretch reads KMSKS. Lys-269 is a binding site for ATP.

The protein belongs to the class-I aminoacyl-tRNA synthetase family. As to quaternary structure, monomer. Zn(2+) serves as cofactor.

Its subcellular location is the cytoplasm. The enzyme catalyses tRNA(Cys) + L-cysteine + ATP = L-cysteinyl-tRNA(Cys) + AMP + diphosphate. The sequence is that of Cysteine--tRNA ligase from Salmonella arizonae (strain ATCC BAA-731 / CDC346-86 / RSK2980).